The primary structure comprises 379 residues: Chaperone protein DnaJ (379 aa).

Positions 5–70 (DYYEVLGLSK…EKKAMYDQYG (66 aa)) constitute a J domain. The segment at 136–214 (GCKKDIRIHT…CHGDGRVHKA (79 aa)) adopts a CR-type zinc-finger fold. Zn(2+) contacts are provided by Cys-149, Cys-152, Cys-166, Cys-169, Cys-188, Cys-191, Cys-202, and Cys-205. 4 CXXCXGXG motif repeats span residues 149 to 156 (CDTCHGTG), 166 to 173 (CSHCHGSG), 188 to 195 (CPSCHGTG), and 202 to 209 (CRSCHGDG).

The protein belongs to the DnaJ family. In terms of assembly, homodimer. Zn(2+) serves as cofactor.

The protein resides in the cytoplasm. Its function is as follows. Participates actively in the response to hyperosmotic and heat shock by preventing the aggregation of stress-denatured proteins and by disaggregating proteins, also in an autonomous, DnaK-independent fashion. Unfolded proteins bind initially to DnaJ; upon interaction with the DnaJ-bound protein, DnaK hydrolyzes its bound ATP, resulting in the formation of a stable complex. GrpE releases ADP from DnaK; ATP binding to DnaK triggers the release of the substrate protein, thus completing the reaction cycle. Several rounds of ATP-dependent interactions between DnaJ, DnaK and GrpE are required for fully efficient folding. Also involved, together with DnaK and GrpE, in the DNA replication of plasmids through activation of initiation proteins. This Mannheimia haemolytica (Pasteurella haemolytica) protein is Chaperone protein DnaJ.